Consider the following 222-residue polypeptide: Ribonuclease S-3 (222 aa).

A signal peptide spans 1–22 (MFRLQLISAFFILLFSLSPVSA). A disulfide bond links C38 and C44. Residue N50 is glycosylated (N-linked (GlcNAc...) asparagine). Residue H54 is the Proton donor of the active site. Residues H54, 92–93 (QM), 109–110 (HE), and 113–114 (RH) each bind RNA. Cystine bridges form between C68–C117, C177–C210, and C193–C204. Residue E110 is part of the active site. The active-site Proton acceptor is H114.

The protein belongs to the RNase T2 family.

The protein localises to the secreted. Its subcellular location is the extracellular space. It carries out the reaction a ribonucleotidyl-ribonucleotide-RNA + H2O = a 3'-end 3'-phospho-ribonucleotide-RNA + a 5'-end dephospho-ribonucleoside-RNA + H(+). In terms of biological role, self-incompatibility (SI) is the inherited ability of a flowering plant to prevent self-fertilization by discriminating between self and non-self pollen during pollination. In many species, self-incompatibility is controlled by the single, multiallelic locus S. In Petunia hybrida (Petunia), this protein is Ribonuclease S-3 (S3).